We begin with the raw amino-acid sequence, 117 residues long: Fluoride-specific ion channel FluC 2 (117 aa).

A run of 4 helical transmembrane segments spans residues 1-21 (MISI…RSAI), 33-53 (LPIA…LTIG), 60-80 (WFPA…STLA), and 95-115 (LFLN…YIGY). Positions 71 and 74 each coordinate Na(+).

It belongs to the fluoride channel Fluc/FEX (TC 1.A.43) family.

It localises to the cell membrane. The enzyme catalyses fluoride(in) = fluoride(out). With respect to regulation, na(+) is not transported, but it plays an essential structural role and its presence is essential for fluoride channel function. Fluoride-specific ion channel. Important for reducing fluoride concentration in the cell, thus reducing its toxicity. The chain is Fluoride-specific ion channel FluC 2 from Staphylococcus aureus (strain COL).